Consider the following 453-residue polypeptide: Alpha-glucosidase (453 aa).

3–69 (TKIVLVGAGS…LPFIVSATTD (67 aa)) lines the NAD(+) pocket. Residue asparagine 149 participates in substrate binding. A Mn(2+)-binding site is contributed by cysteine 171. The active-site Proton donor is histidine 172. Histidine 201 serves as a coordination point for Mn(2+).

As to quaternary structure, homotetramer. Mn(2+) serves as cofactor. Requires Co(2+) as cofactor. Ca(2+) is required as a cofactor. It depends on Fe(2+) as a cofactor. The cofactor is Mg(2+). Sr(2+) serves as cofactor. Requires Ni(2+) as cofactor. NAD(+) is required as a cofactor.

It carries out the reaction Hydrolysis of terminal, non-reducing (1-&gt;4)-linked alpha-D-glucose residues with release of alpha-D-glucose.. The protein operates within glycan degradation; palatinose degradation. Its activity is regulated as follows. Is inhibited by EDTA in vitro. Its function is as follows. Alpha-glucosidase with broad specificity. Hydrolyzes maltose, palatinose, maltulose, trehalose, trehalulose, turanose, leucrose, sucrose and maltitol. Is not active against alpha-galactosides, e.g. melibiose, and alpha-mannosides. Shows an obligate requirement for an O-alpha-glycosidic linkage, since it is not able to cleave beta-glycosidic bonds (cellobiose, gentiobiose, lactose, sophorose or laminaribiose). Cannot hydrolyze phosphorylated alpha-glucosides derivatives. Seems to be involved in the degradation of palatinose, a sucrose isomer that is formed as a reserve material under conditions of excess carbon availability, sequestered in a form unavailable to competitors such as fungi or the host plant, and whose consumption appears to be postponed until the preferentially metabolized carbon source (e.g. sucrose) is depleted. The polypeptide is Alpha-glucosidase (palH) (Erwinia rhapontici (Pectobacterium rhapontici)).